Reading from the N-terminus, the 100-residue chain is uncharacterized protein (100 aa).

This is an uncharacterized protein from Bacillus anthracis.